A 309-amino-acid chain; its full sequence is Carboxylesterase Culp6 homolog (309 aa).

The helical transmembrane segment at 5–25 threads the bilayer; it reads ITVIAVLIVLALIGVGIVQYV. Residues Cys55 and Cys146 are joined by a disulfide bond. Catalysis depends on residues Ser157, Asp253, and His279. A disulfide bridge connects residues Cys249 and Cys256.

This sequence belongs to the cutinase family.

It localises to the cell membrane. It catalyses the reaction a butanoate ester + H2O = an aliphatic alcohol + butanoate + H(+). Its activity is regulated as follows. Inhibited by tetrahydrolipstatin (THL), a specific lipase inhibitor. Esterase that may be involved in cell wall biosynthesis and/or maintenance. Hydrolyzes pNP-butyrate (C4). In Corynebacterium glutamicum (strain ATCC 13032 / DSM 20300 / JCM 1318 / BCRC 11384 / CCUG 27702 / LMG 3730 / NBRC 12168 / NCIMB 10025 / NRRL B-2784 / 534), this protein is Carboxylesterase Culp6 homolog.